The primary structure comprises 183 residues: ATP synthase subunit b 2 (183 aa).

A helical transmembrane segment spans residues 27-47 (PSFYAFLALLIFFGLLLHMGV).

The protein belongs to the ATPase B chain family. F-type ATPases have 2 components, F(1) - the catalytic core - and F(0) - the membrane proton channel. F(1) has five subunits: alpha(3), beta(3), gamma(1), delta(1), epsilon(1). F(0) has three main subunits: a(1), b(2) and c(10-14). The alpha and beta chains form an alternating ring which encloses part of the gamma chain. F(1) is attached to F(0) by a central stalk formed by the gamma and epsilon chains, while a peripheral stalk is formed by the delta and b chains.

It localises to the cell inner membrane. Its function is as follows. F(1)F(0) ATP synthase produces ATP from ADP in the presence of a proton or sodium gradient. F-type ATPases consist of two structural domains, F(1) containing the extramembraneous catalytic core and F(0) containing the membrane proton channel, linked together by a central stalk and a peripheral stalk. During catalysis, ATP synthesis in the catalytic domain of F(1) is coupled via a rotary mechanism of the central stalk subunits to proton translocation. Functionally, component of the F(0) channel, it forms part of the peripheral stalk, linking F(1) to F(0). This chain is ATP synthase subunit b 2, found in Maricaulis maris (strain MCS10) (Caulobacter maris).